A 256-amino-acid polypeptide reads, in one-letter code: H-2 class II histocompatibility antigen, A-K alpha chain (256 aa).

An N-terminal signal peptide occupies residues 1–23 (MPRSRALILGVLALTTMLSLCGG). The segment at 24–111 (EDDIEADHVG…KRSNSTPATN (88 aa)) is alpha-1. At 24–218 (EDDIEADHVG…IPAPMSELTE (195 aa)) the chain is on the extracellular side. Asn105 and Asn145 each carry an N-linked (GlcNAc...) asparagine glycan. An alpha-2 region spans residues 112 to 205 (EAPQATVFPK…GLEEPVLKHW (94 aa)). Positions 114-206 (PQATVFPKSP…LEEPVLKHWE (93 aa)) constitute an Ig-like C1-type domain. Cys134 and Cys190 are disulfide-bonded. The interval 206 to 218 (EPEIPAPMSELTE) is connecting peptide. The chain crosses the membrane as a helical span at residues 219–241 (TVVCALGLSVGLVGIVVGTIFII). At 242–256 (QGLRSGGTSRHPGPL) the chain is on the cytoplasmic side.

The protein belongs to the MHC class II family.

It localises to the membrane. The polypeptide is H-2 class II histocompatibility antigen, A-K alpha chain (H2-Aa) (Mus musculus (Mouse)).